The primary structure comprises 521 residues: Envelope glycoprotein C homolog (521 aa).

Residues 1-21 form the signal peptide; sequence MGPLGRAWLIAAIFAWALLSA. Topologically, residues 22 to 475 are virion surface; sequence RRGLAEEAEA…DASPGLIGSP (454 aa). The disordered stretch occupies residues 24 to 138; sequence GLAEEAEASP…PSKAPPKERK (115 aa). Residues 41-54 are compositionally biased toward low complexity; that stretch reads PTETESSAGTTGAT. The span at 66 to 76 shows a compositional bias: polar residues; it reads EDSTPGATTPV. The N-linked (GlcNAc...) asparagine; by host glycan is linked to Asn111. Cys142 and Cys159 are joined by a disulfide. The Ig-like V-type domain maps to 155 to 227; sequence LYVHCGVADN…LGDNYIFPSP (73 aa). Asn164 and Asn208 each carry an N-linked (GlcNAc...) asparagine; by host glycan. 3 disulfides stabilise this stretch: Cys290–Cys351, Cys390–Cys447, and Cys394–Cys421. The Ig-like C2-type domain occupies 386–451; it reads GEAVCEARCV…PVDYTCTATG (66 aa). A helical transmembrane segment spans residues 476 to 496; the sequence is VLVSVVAVACGLGAVGLLLVA. Over 497–521 the chain is Cytoplasmic; the sequence is ASCLRRKARVIQPGLTRARALGSAP.

This sequence belongs to the herpesviridae glycoprotein C family. In terms of assembly, interacts with host complement component C3; this interaction inhibits host immune response by disregulating complement cascade.

Its subcellular location is the virion membrane. Its function is as follows. Essential for the initial attachment to heparan sulfate moieties of the host cell surface proteoglycans. Plays also a role in host immune evasion by inhibiting the host complement cascade activation. The protein is Envelope glycoprotein C homolog (gC) of Bovine herpesvirus 1.1 (strain Cooper) (BoHV-1).